Reading from the N-terminus, the 613-residue chain is Ribosome-associated molecular chaperone SSB1 (613 aa).

The interval 1 to 391 is nucleotide binding domain (NBD); that stretch reads MADGVFQGAI…ILTGQSTNDD (391 aa). Residues 16 to 18, lysine 73, 205 to 207, 271 to 278, and glycine 342 each bind ATP; these read TTY, GGT, and ERAKRSLS. The inter-domain linker stretch occupies residues 392-402; the sequence is TKDLLLLDVIP. The interval 403 to 613 is substrate binding domain (SBD); it reads LSLGVAMQGN…RAVTKGMATR (211 aa). The lid domain (SBDalpha) stretch occupies residues 516–612; it reads TEEIEKMISD…KRAVTKGMAT (97 aa). The Nuclear export signal signature appears at 574 to 582; it reads IEAALSDAL.

This sequence belongs to the heat shock protein 70 family. Ssb-type Hsp70 subfamily. In terms of assembly, binds to ribosomes. Binds close to the ribosomal tunnel exit via contacts with both ribosomal proteins and rRNA. Directly interacts with nascent polypeptides. This interaction is dependent on the ribosome-associated complex (RAC). Interacts with SSE1. Interacts with FES1.

The protein resides in the cytoplasm. The enzyme catalyses ATP + H2O = ADP + phosphate + H(+). In terms of biological role, ribosome-bound, Hsp70-type chaperone that assists in the cotranslational folding of newly synthesized proteins in the cytosol. Stimulates folding by interacting with nascent chains, binding to short, largely hydrophobic sequences exposed by unfolded proteins, thereby stabilizing longer, more slowly translated, and aggregation-prone nascent polypeptides and domains that cannot fold stably until fully synthesized. The Hsp70-protein substrate interaction depends on ATP-binding and on allosteric regulation between the NBD and the SBD. The ATP-bound state is characterized by a fast exchange rate of substrate (low affinity state), while in the ADP-bound state exchange is much slower (high affinity state). During the Hsp70 cycle, the chaperone switches between the ATP-bound state (open conformation) and the ADP-bound state (closed conformation) by major conformational rearrangements involving mainly the lid domain. Ssb cooperates with a specific Hsp40/Hsp70 co-chaperone termed the ribosome-associated complex (RAC), which stimulates the ATPase activity of the ribosome-associated pool of Ssbs and switches it to the high affinity substrate binding state. Hsp110 chaperone SSE1 and FES1 act as nucleotide exchange factors that cause substrate release. This chain is Ribosome-associated molecular chaperone SSB1 (SSB1), found in Candida albicans (strain WO-1) (Yeast).